The sequence spans 339 residues: Protein-lysine N-methyltransferase EFM3 (339 aa).

S-adenosyl-L-methionine contacts are provided by residues Trp137 and 174–176 (GAG). A Phosphothreonine modification is found at Thr177. Positions 199, 233, and 248 each coordinate S-adenosyl-L-methionine.

Belongs to the class I-like SAM-binding methyltransferase superfamily. EEF2KMT family.

The protein localises to the cytoplasm. Functionally, S-adenosyl-L-methionine-dependent protein-lysine N-methyltransferase that mono-, di- and trimethylates elongation factor 2 (EFT1/EFT2) at 'Lys-509'. This is Protein-lysine N-methyltransferase EFM3 from Saccharomyces cerevisiae (strain ATCC 204508 / S288c) (Baker's yeast).